The chain runs to 777 residues: Penicillin-binding protein 1B (777 aa).

The Cytoplasmic segment spans residues 1-30 (MTRKSSNRSRGRKARSGKSASSSKLQIWLG). A helical; Signal-anchor for type II membrane protein transmembrane segment spans residues 31 to 52 (RIWSIGWKLALTLAAVLVFIGI). Residues 53 to 777 (YLDSMIKQRF…TEWIKKLFEW (725 aa)) lie on the Periplasmic side of the membrane. The segment at 162–334 (LRLEPKLMGM…SYYNPMRYAE (173 aa)) is transglycosylase. Glu-200 serves as the catalytic Proton donor; for transglycosylase activity. Residues 415–709 (SKLEQAIHDQ…ASGALRVYAQ (295 aa)) are transpeptidase. Ser-476 (acyl-ester intermediate; for transpeptidase activity) is an active-site residue.

It in the N-terminal section; belongs to the glycosyltransferase 51 family. In the C-terminal section; belongs to the transpeptidase family.

It is found in the cell inner membrane. The catalysed reaction is [GlcNAc-(1-&gt;4)-Mur2Ac(oyl-L-Ala-gamma-D-Glu-L-Lys-D-Ala-D-Ala)](n)-di-trans,octa-cis-undecaprenyl diphosphate + beta-D-GlcNAc-(1-&gt;4)-Mur2Ac(oyl-L-Ala-gamma-D-Glu-L-Lys-D-Ala-D-Ala)-di-trans,octa-cis-undecaprenyl diphosphate = [GlcNAc-(1-&gt;4)-Mur2Ac(oyl-L-Ala-gamma-D-Glu-L-Lys-D-Ala-D-Ala)](n+1)-di-trans,octa-cis-undecaprenyl diphosphate + di-trans,octa-cis-undecaprenyl diphosphate + H(+). It carries out the reaction Preferential cleavage: (Ac)2-L-Lys-D-Ala-|-D-Ala. Also transpeptidation of peptidyl-alanyl moieties that are N-acyl substituents of D-alanine.. The protein operates within cell wall biogenesis; peptidoglycan biosynthesis. Functionally, cell wall formation. Synthesis of cross-linked peptidoglycan from the lipid intermediates. The enzyme has a penicillin-insensitive transglycosylase N-terminal domain (formation of linear glycan strands) and a penicillin-sensitive transpeptidase C-terminal domain (cross-linking of the peptide subunits). In Vibrio cholerae serotype O1 (strain ATCC 39315 / El Tor Inaba N16961), this protein is Penicillin-binding protein 1B (mrcB).